A 124-amino-acid polypeptide reads, in one-letter code: Small ribosomal subunit protein uS12 (124 aa).

Residue Asp-89 is modified to 3-methylthioaspartic acid.

Belongs to the universal ribosomal protein uS12 family. As to quaternary structure, part of the 30S ribosomal subunit. Contacts proteins S8 and S17. May interact with IF1 in the 30S initiation complex.

Its function is as follows. With S4 and S5 plays an important role in translational accuracy. Functionally, interacts with and stabilizes bases of the 16S rRNA that are involved in tRNA selection in the A site and with the mRNA backbone. Located at the interface of the 30S and 50S subunits, it traverses the body of the 30S subunit contacting proteins on the other side and probably holding the rRNA structure together. The combined cluster of proteins S8, S12 and S17 appears to hold together the shoulder and platform of the 30S subunit. In Erwinia amylovora (Fire blight bacteria), this protein is Small ribosomal subunit protein uS12.